A 401-amino-acid chain; its full sequence is Type 3 secretion system translocon protein SctE (401 aa).

Positions 129-160 form a coiled coil; that stretch reads IQRLHEQNMKKIEENQEKIKETEENAKQVKKS. Transmembrane regions (helical) follow at residues 176-196 and 224-244; these read VIVGAIMVASGVGAVAGAMMV and ILGPILTAIEVALTVVSTVMT. Residues 345 to 379 adopt a coiled-coil conformation; that stretch reads LALNKADMAALQSIIDRLKEELSHLSESHQQVMEL.

It belongs to the SctE/SipB/YopB family. The core secretion machinery of the T3SS is composed of approximately 20 different proteins, including cytoplasmic components, a base, an export apparatus and a needle. This subunit is involved in the formation of a pore, called the translocon, in host membrane. Interacts with YopD/SctB. Together with YopD/SctB, forms a multimeric integral membrane complex.

It is found in the secreted. Its subcellular location is the host membrane. In terms of biological role, component of the type III secretion system (T3SS), also called injectisome, which is used to inject bacterial effector proteins into eukaryotic host cells. YopB/SctE and YopD/SctB are inserted into the host membrane where they form a pore and allow the translocation of effector proteins into the cytosol of target cells. Is an essential virulence determinant. Required for YopE and YopH translocation. Shows membrane disruptive activity in vitro. Interaction with the host cell triggers a signaling response, via activation of the small GTPase Ras, the MAPK kinases ERK and JNK and the nuclear factor NF-kappa-B pathways, and production of the proinflammatory cytokine interleukin-8 (IL-8). YopB/SctE-dependent signaling response is counteracted by YopE, YopH and YopJ in infected host cells. YopB/SctE is directly responsible for signaling and its insertion in the membrane is important to activate the signaling response in the host cell. The chain is Type 3 secretion system translocon protein SctE from Yersinia pseudotuberculosis serotype I (strain IP32953).